A 152-amino-acid chain; its full sequence is Deoxyuridine 5'-triphosphate nucleotidohydrolase (152 aa).

Substrate contacts are provided by residues 63–65 (RSG), asparagine 76, and 80–82 (TID). Positions 129–152 (LDDTERGQGGYGSTGVSAMPPVDG) are disordered.

Belongs to the dUTPase family. Mg(2+) is required as a cofactor.

The enzyme catalyses dUTP + H2O = dUMP + diphosphate + H(+). It participates in pyrimidine metabolism; dUMP biosynthesis; dUMP from dCTP (dUTP route): step 2/2. Its function is as follows. This enzyme is involved in nucleotide metabolism: it produces dUMP, the immediate precursor of thymidine nucleotides and it decreases the intracellular concentration of dUTP so that uracil cannot be incorporated into DNA. The chain is Deoxyuridine 5'-triphosphate nucleotidohydrolase from Cutibacterium acnes (strain DSM 16379 / KPA171202) (Propionibacterium acnes).